The sequence spans 339 residues: Protein RecA (339 aa).

73 to 80 provides a ligand contact to ATP; sequence GPESSGKT.

This sequence belongs to the RecA family.

It localises to the cytoplasm. Functionally, can catalyze the hydrolysis of ATP in the presence of single-stranded DNA, the ATP-dependent uptake of single-stranded DNA by duplex DNA, and the ATP-dependent hybridization of homologous single-stranded DNAs. It interacts with LexA causing its activation and leading to its autocatalytic cleavage. The protein is Protein RecA of Mycoplasmopsis pulmonis (strain UAB CTIP) (Mycoplasma pulmonis).